A 392-amino-acid chain; its full sequence is BURP domain protein RD22 (392 aa).

The first 22 residues, 1-22 (MAIRLPLICLLGSFMVVAIAAD), serve as a signal peptide directing secretion. 4 TXV repeats span residues 56–58 (TNV), 78–80 (TAV), 100–102 (THV), and 125–127 (TDV). The tract at residues 57-164 (NVQVGKGGVN…PFVYNYAAKE (108 aa)) is 5 X approximate repeats. The interval 61 to 136 (GKGGVNVNTH…VGVGKGGVTV (76 aa)) is disordered. A compositionally biased stretch (gly residues) spans 94 to 114 (GKPGGGTHVSVGSGKGHGGGV). The BURP domain occupies 176–392 (FFLEKDLVRG…PETHVVWFSY (217 aa)).

As to expression, expressed in seed. Highest expression in leaves and guard cells.

In terms of biological role, acts to suppress chlorophyll degradation under moisture stress. The protein is BURP domain protein RD22 of Arabidopsis thaliana (Mouse-ear cress).